The primary structure comprises 35 residues: Augerpeptide hheTx4 (35 aa).

Post-translationally, contains 4 disulfide bonds. In terms of tissue distribution, expressed by the venom duct.

The protein localises to the secreted. The polypeptide is Augerpeptide hheTx4 (Hastula hectica (Sea snail)).